A 778-amino-acid polypeptide reads, in one-letter code: Protein translocase subunit SecA 2 (778 aa).

ATP is bound by residues Gln-94, 112-116, and Asp-501; that span reads GEGKT.

It belongs to the SecA family. As to quaternary structure, monomer and homodimer. Part of the essential Sec protein translocation apparatus which comprises SecA, SecYEG and auxiliary proteins SecDF. Other proteins may also be involved.

The protein localises to the cell membrane. It is found in the cytoplasm. It catalyses the reaction ATP + H2O + cellular proteinSide 1 = ADP + phosphate + cellular proteinSide 2.. Functionally, part of the Sec protein translocase complex. Interacts with the SecYEG preprotein conducting channel. Has a central role in coupling the hydrolysis of ATP to the transfer of proteins into and across the cell membrane, serving as an ATP-driven molecular motor driving the stepwise translocation of polypeptide chains across the membrane. This Mycobacterium leprae (strain TN) protein is Protein translocase subunit SecA 2.